The chain runs to 348 residues: Probable dual-specificity RNA methyltransferase RlmN (348 aa).

Glutamate 89 functions as the Proton acceptor in the catalytic mechanism. The Radical SAM core domain occupies 95-328; that stretch reads HKNRNTVCVS…VTLRISYGSR (234 aa). A disulfide bond links cysteine 102 and cysteine 333. 3 residues coordinate [4Fe-4S] cluster: cysteine 109, cysteine 113, and cysteine 116. Residues 159–160, serine 191, 214–216, and asparagine 290 each bind S-adenosyl-L-methionine; these read GE and SLH. The active-site S-methylcysteine intermediate is cysteine 333.

The protein belongs to the radical SAM superfamily. RlmN family. [4Fe-4S] cluster serves as cofactor.

It localises to the cytoplasm. It catalyses the reaction adenosine(2503) in 23S rRNA + 2 reduced [2Fe-2S]-[ferredoxin] + 2 S-adenosyl-L-methionine = 2-methyladenosine(2503) in 23S rRNA + 5'-deoxyadenosine + L-methionine + 2 oxidized [2Fe-2S]-[ferredoxin] + S-adenosyl-L-homocysteine. The catalysed reaction is adenosine(37) in tRNA + 2 reduced [2Fe-2S]-[ferredoxin] + 2 S-adenosyl-L-methionine = 2-methyladenosine(37) in tRNA + 5'-deoxyadenosine + L-methionine + 2 oxidized [2Fe-2S]-[ferredoxin] + S-adenosyl-L-homocysteine. Its function is as follows. Specifically methylates position 2 of adenine 2503 in 23S rRNA and position 2 of adenine 37 in tRNAs. The sequence is that of Probable dual-specificity RNA methyltransferase RlmN from Dictyoglomus thermophilum (strain ATCC 35947 / DSM 3960 / H-6-12).